Reading from the N-terminus, the 158-residue chain is Cyclic pyranopterin monophosphate synthase (158 aa).

Residues 75–77 (LCH) and 113–114 (ME) each bind substrate. Residue Asp-128 is part of the active site.

Belongs to the MoaC family. In terms of assembly, homohexamer; trimer of dimers.

It catalyses the reaction (8S)-3',8-cyclo-7,8-dihydroguanosine 5'-triphosphate = cyclic pyranopterin phosphate + diphosphate. It participates in cofactor biosynthesis; molybdopterin biosynthesis. Its function is as follows. Catalyzes the conversion of (8S)-3',8-cyclo-7,8-dihydroguanosine 5'-triphosphate to cyclic pyranopterin monophosphate (cPMP). The protein is Cyclic pyranopterin monophosphate synthase of Dinoroseobacter shibae (strain DSM 16493 / NCIMB 14021 / DFL 12).